The sequence spans 198 residues: Probable chorismate pyruvate-lyase (198 aa).

Positions 73, 111, and 172 each coordinate substrate.

Belongs to the UbiC family.

The protein resides in the cytoplasm. It carries out the reaction chorismate = 4-hydroxybenzoate + pyruvate. Its pathway is cofactor biosynthesis; ubiquinone biosynthesis. Removes the pyruvyl group from chorismate, with concomitant aromatization of the ring, to provide 4-hydroxybenzoate (4HB) for the ubiquinone pathway. The polypeptide is Probable chorismate pyruvate-lyase (Burkholderia lata (strain ATCC 17760 / DSM 23089 / LMG 22485 / NCIMB 9086 / R18194 / 383)).